The sequence spans 221 residues: Uracil-DNA glycosylase (221 aa).

The active-site Proton acceptor is the D63.

Belongs to the uracil-DNA glycosylase (UDG) superfamily. UNG family.

The protein resides in the cytoplasm. It carries out the reaction Hydrolyzes single-stranded DNA or mismatched double-stranded DNA and polynucleotides, releasing free uracil.. Its function is as follows. Excises uracil residues from the DNA which can arise as a result of misincorporation of dUMP residues by DNA polymerase or due to deamination of cytosine. The chain is Uracil-DNA glycosylase from Blochmanniella floridana.